A 218-amino-acid polypeptide reads, in one-letter code: UPF0598 protein C8orf82 homolog (218 aa).

It belongs to the UPF0598 family.

In Mus musculus (Mouse), this protein is UPF0598 protein C8orf82 homolog.